Reading from the N-terminus, the 338-residue chain is Ketol-acid reductoisomerase (NADP(+)) (338 aa).

The KARI N-terminal Rossmann domain maps to 1–181 (MKVYYDKDCD…GGGRTGIIET (181 aa)). Residues 24–27 (YGSQ), Arg47, Ser50, Ser52, and 82–85 (DEFQ) contribute to the NADP(+) site. His107 is a catalytic residue. Gly133 is an NADP(+) binding site. The KARI C-terminal knotted domain maps to 182–327 (TFKDETETDL…EKLRTMMPWI (146 aa)). Residues Asp190, Glu194, Glu226, and Glu230 each coordinate Mg(2+). Ser251 contributes to the substrate binding site.

Belongs to the ketol-acid reductoisomerase family. Mg(2+) serves as cofactor.

It carries out the reaction (2R)-2,3-dihydroxy-3-methylbutanoate + NADP(+) = (2S)-2-acetolactate + NADPH + H(+). It catalyses the reaction (2R,3R)-2,3-dihydroxy-3-methylpentanoate + NADP(+) = (S)-2-ethyl-2-hydroxy-3-oxobutanoate + NADPH + H(+). The protein operates within amino-acid biosynthesis; L-isoleucine biosynthesis; L-isoleucine from 2-oxobutanoate: step 2/4. It functions in the pathway amino-acid biosynthesis; L-valine biosynthesis; L-valine from pyruvate: step 2/4. Its function is as follows. Involved in the biosynthesis of branched-chain amino acids (BCAA). Catalyzes an alkyl-migration followed by a ketol-acid reduction of (S)-2-acetolactate (S2AL) to yield (R)-2,3-dihydroxy-isovalerate. In the isomerase reaction, S2AL is rearranged via a Mg-dependent methyl migration to produce 3-hydroxy-3-methyl-2-ketobutyrate (HMKB). In the reductase reaction, this 2-ketoacid undergoes a metal-dependent reduction by NADPH to yield (R)-2,3-dihydroxy-isovalerate. This Azotobacter vinelandii (strain DJ / ATCC BAA-1303) protein is Ketol-acid reductoisomerase (NADP(+)).